Consider the following 344-residue polypeptide: D-amino-acid oxidase (344 aa).

The FAD site is built by Ala-11, Ser-14, Ser-49, Gly-53, Asn-55, and Ile-167. Positions 229 and 290 each coordinate (R)-lactate. 2 residues coordinate anthranilate: Tyr-229 and Arg-290. Arg-290, Ser-321, Gly-324, Tyr-325, and Gln-326 together coordinate FAD.

This sequence belongs to the DAMOX/DASOX family. FAD is required as a cofactor.

It is found in the peroxisome. The enzyme catalyses a D-alpha-amino acid + O2 + H2O = a 2-oxocarboxylate + H2O2 + NH4(+). It carries out the reaction D-alanine + O2 + H2O = pyruvate + H2O2 + NH4(+). In terms of biological role, catalyzes the oxidative deamination of D-amino acids with broad substrate specificity. Enables the organism to utilize D-amino acids as a source of nutrients. Enables the organism to utilize D-alanine as a source of nitrogen. The polypeptide is D-amino-acid oxidase (Komagataella phaffii (strain GS115 / ATCC 20864) (Yeast)).